A 4776-amino-acid chain; its full sequence is Pneumococcal serine-rich repeat protein (4776 aa).

The signal sequence occupies residues 1–72 (MTETVEDKVS…VVLGTISTSN (72 aa)). 13 O-linked (GlcNAc...) serine glycosylation sites follow: serine 73, serine 75, serine 76, serine 78, serine 80, serine 82, serine 94, serine 100, serine 108, serine 110, serine 118, serine 120, and serine 121. Residues 73–121 (SASSTSLSASESASTSASESASTSASTSASTSASESASTSASTSISASS) are serine-rich repeat region 1, SRR1. The interval 86 to 112 (STSASESASTSASTSASTSASESASTS) is disordered. The interval 122 to 166 (TVVGSQTAAATEATAKKVEEDRKKPASDYVASVTNVNLQSYAKRR) is self aggregating domain. The interval 122–394 (TVVGSQTAAA…QSKSLSVSAS (273 aa)) is basic region, BR. The short motif at 164–168 (KRRKR) is the Host furin cleavage recognition element. Residues 273-341 (TQTMLTLGSD…GYGLTSSWTV (69 aa)) form a keratin 10-binding domain, cell-type specific binding to lung-derived cells region. Positions 395–4712 (QSASASASTS…ASTSASASAS (4318 aa)) are serine-rich repeat region 2, SRR2. 27 disordered regions span residues 481–627 (ASTS…STSA), 861–889 (ASAS…SAST), 925–965 (ASAS…SASA), 1052–1085 (SAST…SASA), 1123–1153 (ASAS…STSA), 1171–1199 (ASAS…STSA), 1311–1357 (ASES…SAST), 1671–1731 (ASES…SESA), 1792–1863 (SASE…STSA), 2105–2133 (ASAS…SAST), 2169–2209 (ASAS…SASA), 2296–2329 (SAST…SASA), 2367–2397 (ASAS…STSA), 2415–2443 (ASAS…STSA), 2571–2631 (ASES…SESA), 2737–2805 (ESAS…STSA), 2855–3113 (ASAS…STSA), 3347–3375 (ASAS…SAST), 3411–3451 (ASAS…SASA), 3538–3571 (SAST…SASA), 3609–3639 (ASAS…STSA), 3657–3685 (ASAS…STSA), 3797–3843 (ASES…SAST), 4167–4197 (ASAS…STSA), 4215–4243 (ASAS…STSA), 4355–4401 (ASES…SAST), and 4706–4747 (SASA…GTES). Over residues 4715-4747 (VSNSANHSNSQVGNTSGSTGKSQKELPNTGTES) the composition is skewed to polar residues. The LPXTG sorting signal signature appears at 4740 to 4744 (LPNTG). Residue threonine 4743 is modified to Pentaglycyl murein peptidoglycan amidated threonine. A propeptide spans 4744–4776 (GTESSIGSVLLGVLAAVTGIGLVAKRRKRDEEE) (removed by sortase).

Belongs to the serine-rich repeat protein (SRRP) family. In terms of assembly, binds to human and mouse protein keratin 10 (KRT10). Glycosylated. Only truncated substrates greater than 25 residues long are glycosylated by the Gtf1-Gtf2 complex in vitro; only Ser residues have been seen to be glycosylated. Based on electrophoretic mobility it is probable that most of the Ser residues in SSR1 and SSR2 are O-GlcNAcylated. Subsequent glycosylation by up to 7 sugar transferases (Gtf3 and GlyAT, GlyB, GlyD, GlyE, GlyF and GlyG) is able to generate very high sugar polymorphism. In terms of processing, can be cleaved by human furin protease; this fragment contributes to self-aggregation and possibly biofilm formation in vitro.

It is found in the secreted. It localises to the cell wall. Its subcellular location is the cell surface. Functionally, protein that allows bacteria to adhere to mammalian host cells. Required for full virulence in mouse infection models when infected intranasally. Required for adhesion to host cells in vitro and for persistence in the lower respiratory tract. Binds host keratin 10 (KRT10) on lung cells which mediates adhesion via the C-terminus of the basic region (BR, residues 273-341); glycosylation of either protein is not required for the interaction. A region in the N-terminus (residues 122-166) self aggregates, contributing to mature biofilm formation. The basic region (BR, residues 187-385) also self aggregates; the BR binds DNA which enhances self aggregation. This chain is Pneumococcal serine-rich repeat protein, found in Streptococcus pneumoniae serotype 4 (strain ATCC BAA-334 / TIGR4).